The chain runs to 432 residues: MSTANPASAPDSFFSASLEQADPEIAAAIRGELGRQRHEVELIASENIVSRAVLEAQGSVMTNKYAEGYPGNRYYGGCEFVDVAENLAIDRAKKLFGANFANVQPNSGSQMNQAVFLALLQPGDTFMGLDLAAGGHLTHGAPVNMSGKWFKPVHYTVRREDQMIDMDAVAKLAEEAKPKLIIAGGSAYPRAWDFKRFREIADSVGAYFMVDMAHFAGLVAGGVHASPVPHAHVTTTTTHKSLRGPRGGLILTNDEALAKKFNSAIFPGLQGGPLMHVIAAKAVAFKEALQPDFKVYTKNVVENAKALAETLRSAGFDLVSGGTDNHLMLVDLRPKGLKGNVSEKALVRAGITCNKNGIPFDPEKPFVTSGLRLGTPAATTRGFGVAEFQQVGHLIAEVLNAIAQSSDGAAPLVEASVKQRVKELTDRFPIYQ.

(6S)-5,6,7,8-tetrahydrofolate contacts are provided by residues Leu-131 and 135–137 (GHL). Position 240 is an N6-(pyridoxal phosphate)lysine (Lys-240).

Belongs to the SHMT family. As to quaternary structure, homodimer. It depends on pyridoxal 5'-phosphate as a cofactor.

It is found in the cytoplasm. The enzyme catalyses (6R)-5,10-methylene-5,6,7,8-tetrahydrofolate + glycine + H2O = (6S)-5,6,7,8-tetrahydrofolate + L-serine. It functions in the pathway one-carbon metabolism; tetrahydrofolate interconversion. It participates in amino-acid biosynthesis; glycine biosynthesis; glycine from L-serine: step 1/1. Functionally, catalyzes the reversible interconversion of serine and glycine with tetrahydrofolate (THF) serving as the one-carbon carrier. This reaction serves as the major source of one-carbon groups required for the biosynthesis of purines, thymidylate, methionine, and other important biomolecules. Also exhibits THF-independent aldolase activity toward beta-hydroxyamino acids, producing glycine and aldehydes, via a retro-aldol mechanism. The polypeptide is Serine hydroxymethyltransferase 1 (Rhodopseudomonas palustris (strain ATCC BAA-98 / CGA009)).